We begin with the raw amino-acid sequence, 511 residues long: Keratin, type II cytoskeletal 72 (511 aa).

The head stretch occupies residues 1-124 (MSRQLTHFPR…DPEIQRVRAQ (124 aa)). Residues 125–160 (EREQIKALNNKFASFIDKVRFLEQQNQVLETKWNLL) form a coil 1A region. Residues 125–438 (EREQIKALNN…KLLESEECRM (314 aa)) form the IF rod domain. Residues 161 to 179 (QQLDLNNCRKNLEPIYEGY) form a linker 1 region. The segment at 180-271 (ISNLQKQLEM…CLYEGEITQI (92 aa)) is coil 1B. The segment at 272–295 (QSHISDTSIVLSMDNNRDLDLDSI) is linker 12. Residues 296–434 (IAEVRAQYEE…ATYRKLLESE (139 aa)) form a coil 2 region. The tract at residues 435–511 (ECRMSGEYPN…SSCATKKASR (77 aa)) is tail. Residues 486 to 511 (GSCGSELKDPLAKTSGSSCATKKASR) form a disordered region.

Belongs to the intermediate filament family. As to quaternary structure, heterotetramer of two type I and two type II keratins. As to expression, highly expressed in hair follicles from scalp and eyebrow. Also expressed in palmoplantar epidermis. Not expressed in face skin despite the presence of fine hairs histologically. In hair, it is specifically present in the inner root sheath (IRS) of the hair follicle. Present in the IRS cuticle, but not in Henle or Huxley layers of the IRS. In the IRS cuticle, its presence is delayed up to the height of the apex of the dermal papilla (at protein level).

Its function is as follows. Has a role in hair formation. Specific component of keratin intermediate filaments in the inner root sheath (IRS) of the hair follicle. The polypeptide is Keratin, type II cytoskeletal 72 (KRT72) (Homo sapiens (Human)).